The chain runs to 230 residues: Dephospho-CoA kinase (230 aa).

Positions 3–225 (IIGLTGGIAT…REGGAICPTP (223 aa)) constitute a DPCK domain. Residue 11 to 16 (ATGKST) participates in ATP binding.

The protein belongs to the CoaE family.

Its subcellular location is the cytoplasm. It carries out the reaction 3'-dephospho-CoA + ATP = ADP + CoA + H(+). Its pathway is cofactor biosynthesis; coenzyme A biosynthesis; CoA from (R)-pantothenate: step 5/5. In terms of biological role, catalyzes the phosphorylation of the 3'-hydroxyl group of dephosphocoenzyme A to form coenzyme A. The chain is Dephospho-CoA kinase from Synechococcus sp. (strain JA-3-3Ab) (Cyanobacteria bacterium Yellowstone A-Prime).